The sequence spans 309 residues: Ras-like protein 1 (309 aa).

Residues 20-25 (GVGKSA), 36-42 (VDEYDPT), 66-67 (AG), 123-126 (NKLD), and 153-155 (SAK) contribute to the GTP site. Positions 39–47 (YDPTIEDSY) match the Effector region motif. The segment at 177–303 (KYNSMNRQLD…SANARKESSG (127 aa)) is disordered. Polar residues-rich tracts occupy residues 179 to 188 (NSMNRQLDNT) and 209 to 235 (NGSY…NHNG). The segment covering 236 to 245 (ETTKRTDEKN) has biased composition (basic and acidic residues). Residues 246 to 256 (YVNQNNNNEGN) are compositionally biased toward low complexity. A compositionally biased stretch (polar residues) spans 257 to 296 (TKYSSNGNGNRSDISRGNQNNALNSRSKQSAEPQKNSSAN). Residue Cys305 is the site of S-palmitoyl cysteine attachment. Cys306 carries the cysteine methyl ester modification. The S-farnesyl cysteine moiety is linked to residue Cys306. Residues 307 to 309 (IIC) constitute a propeptide, removed in mature form.

It belongs to the small GTPase superfamily. Ras family. In terms of processing, farnesylated by RAM1-RAM2, which is required for targeting RAS1 to the cytoplasmic site of the endoplasmic reticulum, where proteolytic processing of the C-terminus by RCE1 and methylation of the resulting carboxyl group by STE14 occurs. Palmitoylated by the ERF2-SHR5 complex, which is required for proper plasma membrane localization of RAS1.

It localises to the cell membrane. The catalysed reaction is GTP + H2O = GDP + phosphate + H(+). With respect to regulation, alternates between an inactive form bound to GDP and an active form bound to GTP. Activated by guanine nucleotide-exchange factor (GEF) CDC25 and inactivated by GTPase-activating proteins (GAPs) IRA1 and IRA2. In terms of biological role, the S.cerevisiae Ras proteins modulate the activity of the adenylate cyclase catalytic subunit and therefore affect the biosynthesis of cyclic-AMP. The sequence is that of Ras-like protein 1 (RAS1) from Saccharomyces cerevisiae (strain ATCC 204508 / S288c) (Baker's yeast).